A 419-amino-acid chain; its full sequence is MNLTELKNTPVSELITLGESMGLENLARMRKQDIIFAILKQHAKSGEDIFGDGVLEILQDGFGFLRSADSSYLAGPDDIYVSPSQIRRFNLRTGDTISGKIRPPKEGERYFALLKVNEVNYDKPENARNKILFENLTPLHANSRLRMERGNGSTEDLTARVLDLASPIGRGQRGLIVAPPKAGKTMLLQNIAQSIAYNHPDCVLMVLLIDERPEEVTEMQRLVKGEVVASTFDEPASRHVQVAEMVIEKAKRLVEHKKDVIILLDSITRLARAYNTVVPASGKVLTGGVDANALHRPKRFFGAARNVEEGGSLTIIATALIDTGSKMDEVIYEEFKGTGNMELHLSRKIAEKRVFPAIDYNRSGTRKEELLTTQEELQKMWILRKIIHPMGEIDAMEFLINKLAMTKTNDDFFEMMKRS.

Residues 48-123 (DIFGDGVLEI…LKVNEVNYDK (76 aa)) enclose the Rho RNA-BD domain. RNA-binding stretches follow at residues 61–66 (GFGFLR), 78–80 (DIY), and 108–110 (ERY). ATP contacts are provided by residues 169–174 (GRGQRG), 181–186 (KAGKTM), and Arg-212. The RNA-binding 2 stretch occupies residues 284 to 288 (VLTGG).

The protein belongs to the Rho family. As to quaternary structure, homohexamer. The homohexamer assembles into an open ring structure.

Facilitates transcription termination by a mechanism that involves Rho binding to the nascent RNA, activation of Rho's RNA-dependent ATPase activity, and release of the mRNA from the DNA template. The sequence is that of Transcription termination factor Rho from Salmonella typhi.